Consider the following 325-residue polypeptide: Holliday junction branch migration complex subunit RuvB (325 aa).

The segment at 1-181 (MENRLINPVE…FGIVQRLEFY (181 aa)) is large ATPase domain (RuvB-L). Residues I20, R21, G62, K65, T66, T67, 128–130 (EDF), R171, Y181, and R218 contribute to the ATP site. T66 contributes to the Mg(2+) binding site. The segment at 182–252 (NIEDLTTIVS…IADSALDMLA (71 aa)) is small ATPAse domain (RuvB-S). The head domain (RuvB-H) stretch occupies residues 255-325 (RRGLDHLDRR…VLTQMAIDQL (71 aa)). 3 residues coordinate DNA: R291, R310, and R315.

It belongs to the RuvB family. In terms of assembly, homohexamer. Forms an RuvA(8)-RuvB(12)-Holliday junction (HJ) complex. HJ DNA is sandwiched between 2 RuvA tetramers; dsDNA enters through RuvA and exits via RuvB. An RuvB hexamer assembles on each DNA strand where it exits the tetramer. Each RuvB hexamer is contacted by two RuvA subunits (via domain III) on 2 adjacent RuvB subunits; this complex drives branch migration. In the full resolvosome a probable DNA-RuvA(4)-RuvB(12)-RuvC(2) complex forms which resolves the HJ.

Its subcellular location is the cytoplasm. The enzyme catalyses ATP + H2O = ADP + phosphate + H(+). The RuvA-RuvB-RuvC complex processes Holliday junction (HJ) DNA during genetic recombination and DNA repair, while the RuvA-RuvB complex plays an important role in the rescue of blocked DNA replication forks via replication fork reversal (RFR). RuvA specifically binds to HJ cruciform DNA, conferring on it an open structure. The RuvB hexamer acts as an ATP-dependent pump, pulling dsDNA into and through the RuvAB complex. RuvB forms 2 homohexamers on either side of HJ DNA bound by 1 or 2 RuvA tetramers; 4 subunits per hexamer contact DNA at a time. Coordinated motions by a converter formed by DNA-disengaged RuvB subunits stimulates ATP hydrolysis and nucleotide exchange. Immobilization of the converter enables RuvB to convert the ATP-contained energy into a lever motion, pulling 2 nucleotides of DNA out of the RuvA tetramer per ATP hydrolyzed, thus driving DNA branch migration. The RuvB motors rotate together with the DNA substrate, which together with the progressing nucleotide cycle form the mechanistic basis for DNA recombination by continuous HJ branch migration. Branch migration allows RuvC to scan DNA until it finds its consensus sequence, where it cleaves and resolves cruciform DNA. The sequence is that of Holliday junction branch migration complex subunit RuvB from Psychrobacter sp. (strain PRwf-1).